A 774-amino-acid chain; its full sequence is Protein translocase subunit SecA 2 (774 aa).

ATP contacts are provided by residues Gln94, 112 to 116 (GEGKT), and Asp501.

The protein belongs to the SecA family. As to quaternary structure, monomer and homodimer. Part of the essential Sec protein translocation apparatus which comprises SecA, SecYEG and auxiliary proteins SecDF. Other proteins may also be involved.

It localises to the cell membrane. It is found in the cytoplasm. The catalysed reaction is ATP + H2O + cellular proteinSide 1 = ADP + phosphate + cellular proteinSide 2.. Part of the Sec protein translocase complex. Interacts with the SecYEG preprotein conducting channel. Has a central role in coupling the hydrolysis of ATP to the transfer of proteins into and across the cell membrane, serving as an ATP-driven molecular motor driving the stepwise translocation of polypeptide chains across the membrane. This is Protein translocase subunit SecA 2 from Mycobacterium sp. (strain JLS).